Reading from the N-terminus, the 453-residue chain is Signal transduction histidine-protein kinase ArlS (453 aa).

2 consecutive transmembrane segments (helical) span residues 14–34 and 157–177; these read ITTLIMFSTIILFCLVIIFFL and FVAIAFGLLATFIMAGISYIF. An HAMP domain is found at 179–232; that stretch reads TQLTKPLVTMSNKMIQIRRDGFQNKLELKTNYEETDNLIDTFNDMMYQIEESFN. Residues 240–453 form the Histidine kinase domain; the sequence is DASHELRTPL…QYTTFKIIFK (214 aa). His243 bears the Phosphohistidine; by autocatalysis mark.

Autophosphorylated.

The protein localises to the cell membrane. The catalysed reaction is ATP + protein L-histidine = ADP + protein N-phospho-L-histidine.. Member of the two-component regulatory system ArlS/ArlR. ArlS probably functions as a sensor protein kinase which is autophosphorylated at a histidine residue and transfers its phosphate group to ArlR. This is Signal transduction histidine-protein kinase ArlS (arlS) from Staphylococcus haemolyticus (strain JCSC1435).